Here is a 225-residue protein sequence, read N- to C-terminus: Ribosomal RNA large subunit methyltransferase E (225 aa).

Positions 76, 78, 99, 115, and 139 each coordinate S-adenosyl-L-methionine. Lys-179 functions as the Proton acceptor in the catalytic mechanism.

It belongs to the class I-like SAM-binding methyltransferase superfamily. RNA methyltransferase RlmE family.

Its subcellular location is the cytoplasm. The catalysed reaction is uridine(2552) in 23S rRNA + S-adenosyl-L-methionine = 2'-O-methyluridine(2552) in 23S rRNA + S-adenosyl-L-homocysteine + H(+). Its function is as follows. Specifically methylates the uridine in position 2552 of 23S rRNA at the 2'-O position of the ribose in the fully assembled 50S ribosomal subunit. The protein is Ribosomal RNA large subunit methyltransferase E of Afipia carboxidovorans (strain ATCC 49405 / DSM 1227 / KCTC 32145 / OM5) (Oligotropha carboxidovorans).